Reading from the N-terminus, the 253-residue chain is 5'-nucleotidase SurE (253 aa).

A divalent metal cation-binding residues include aspartate 8, aspartate 9, serine 39, and asparagine 95.

It belongs to the SurE nucleotidase family. A divalent metal cation serves as cofactor.

The protein localises to the cytoplasm. The enzyme catalyses a ribonucleoside 5'-phosphate + H2O = a ribonucleoside + phosphate. In terms of biological role, nucleotidase that shows phosphatase activity on nucleoside 5'-monophosphates. This Chloroflexus aggregans (strain MD-66 / DSM 9485) protein is 5'-nucleotidase SurE.